A 1423-amino-acid polypeptide reads, in one-letter code: DNA-directed RNA polymerase subunit beta' (1423 aa).

Residues Cys-70, Cys-72, Cys-85, and Cys-88 each coordinate Zn(2+). Mg(2+)-binding residues include Asp-461, Asp-463, and Asp-465. Residues Cys-809, Cys-883, Cys-890, and Cys-893 each contribute to the Zn(2+) site. Positions 1383–1423 are disordered; the sequence is EEHAAELRQPVQADTGDDPLGAVVGESHGTDADAGDYLTEE.

This sequence belongs to the RNA polymerase beta' chain family. The RNAP catalytic core consists of 2 alpha, 1 beta, 1 beta' and 1 omega subunit. When a sigma factor is associated with the core the holoenzyme is formed, which can initiate transcription. Requires Mg(2+) as cofactor. Zn(2+) serves as cofactor.

The catalysed reaction is RNA(n) + a ribonucleoside 5'-triphosphate = RNA(n+1) + diphosphate. In terms of biological role, DNA-dependent RNA polymerase catalyzes the transcription of DNA into RNA using the four ribonucleoside triphosphates as substrates. The protein is DNA-directed RNA polymerase subunit beta' of Rhizorhabdus wittichii (strain DSM 6014 / CCUG 31198 / JCM 15750 / NBRC 105917 / EY 4224 / RW1) (Sphingomonas wittichii).